We begin with the raw amino-acid sequence, 493 residues long: Protein kinase PINOID 2 (493 aa).

A disordered region spans residues 1–53 (MAAIKEESDYDSSRSSLTAPDSRRSWISDIGSSSSVSARSFGGDTPASSCRYK). Low complexity predominate over residues 27–44 (ISDIGSSSSVSARSFGGD). A Protein kinase domain is found at 80 to 443 (FRLVRRLGSG…SAEVKRHPFF (364 aa)). ATP-binding positions include 86-94 (LGSGDLGNV) and lysine 120. Aspartate 216 (proton acceptor) is an active-site residue. A compositionally biased stretch (gly residues) spans 295–306 (GGGAAAGNNGDG). 2 disordered regions span residues 295–320 (GGGAAAGNNGDGDGNDEEAETETAEP) and 458–493 (EVPAPPAPAPKKVMTMSKKERQEPYNYRPENHFDYF). Residues 307 to 319 (DGNDEEAETETAE) show a composition bias toward acidic residues. Residues 444–493 (KGVNWALVRSVRPPEVPAPPAPAPKKVMTMSKKERQEPYNYRPENHFDYF) enclose the AGC-kinase C-terminal domain. Residues 474–493 (SKKERQEPYNYRPENHFDYF) are compositionally biased toward basic and acidic residues.

This sequence belongs to the protein kinase superfamily. Ser/Thr protein kinase family.

It catalyses the reaction L-seryl-[protein] + ATP = O-phospho-L-seryl-[protein] + ADP + H(+). It carries out the reaction L-threonyl-[protein] + ATP = O-phospho-L-threonyl-[protein] + ADP + H(+). In terms of biological role, serine/threonine-protein kinase involved in the regulation of auxin signaling. The protein is Protein kinase PINOID 2 (PID2) of Oryza sativa subsp. japonica (Rice).